Here is a 276-residue protein sequence, read N- to C-terminus: MHPAAEHSPLGKSSEYIATYTPSLLFPIPRTAKWAELGLTAETLPYKGVDFWNCFELSWLLPSGKPVVAIGEFSIPADSPNIIESKSFKLYLNSLNQTPFADTASLEATLVKDLSAAAGKPVGVRVRSLKDVEAEGVVALPGVCIDDLDISVSDYEHPRPELLRCDDSRVVEESVHSHLLKSNCPVTSQPDWGSVVVEYRGAALDHASLLEYIVSFRQHSDFHEQCVERIFLDLQRLLKPEKLTVFARYVRRGGLDINPYRSTESVQLPNHRLVRQ.

Residue 83-85 (IES) participates in substrate binding. 85–86 (SK) is a binding site for NADPH. Cys184 functions as the Thioimide intermediate in the catalytic mechanism. Asp191 (proton donor) is an active-site residue. 223–224 (HE) contacts substrate. NADPH is bound at residue 252-253 (RG).

This sequence belongs to the GTP cyclohydrolase I family. QueF type 2 subfamily. As to quaternary structure, homodimer.

It localises to the cytoplasm. It catalyses the reaction 7-aminomethyl-7-carbaguanine + 2 NADP(+) = 7-cyano-7-deazaguanine + 2 NADPH + 3 H(+). Its pathway is tRNA modification; tRNA-queuosine biosynthesis. Functionally, catalyzes the NADPH-dependent reduction of 7-cyano-7-deazaguanine (preQ0) to 7-aminomethyl-7-deazaguanine (preQ1). In Pseudomonas fluorescens (strain Pf0-1), this protein is NADPH-dependent 7-cyano-7-deazaguanine reductase.